The chain runs to 417 residues: MISLNLSPSLNPGLLHKTRTCQQPTRLSALLVTNPKPFNHRHPLGLSPIPNLQIRDVSAKPLLSLTNPESSSGFSRKPRSIAAVGSSDSNPDEKSDLGEAEKKEKKAKTLQLGIVFGLWYFQNIVFNIFNKKALNVFPYPWLLASFQLFAGSIWMLVLWSFKLYPCPKISKPFIIALLGPALFHTIGHISACVSFSKVAVSFTHVIKSAEPVFSVIFSSLLGDSYPLAVWLSILPIVMGCSLAAVTEVSFNLGGLSGAMISNVGFVLRNIYSKRSLQSFKEIDGLNLYGCISILSLLYLFPVAIFVEGSHWVPGYHKAIASVGTPSTFYFWVLLSGVFYHLYNQSSYQALDEISPLTFSVGNTMKRVVVIISTVLVFRNPVRPLNALGSAIAIFGTFLYSQATAKKKKIEVGGDKKN.

The N-terminal 82 residues, 1–82 (MISLNLSPSL…GFSRKPRSIA (82 aa)), are a transit peptide targeting the chloroplast. The interval 66-102 (TNPESSSGFSRKPRSIAAVGSSDSNPDEKSDLGEAEK) is disordered. At Ala-83 the chain carries N-acetylalanine. Residues 91 to 102 (PDEKSDLGEAEK) are compositionally biased toward basic and acidic residues. 9 helical membrane passes run 109–129 (TLQLGIVFGLWYFQNIVFNIF), 141–161 (WLLASFQLFAGSIWMLVLWSF), 173–193 (FIIALLGPALFHTIGHISACV), 198–218 (VAVSFTHVIKSAEPVFSVIFS), 225–245 (YPLAVWLSILPIVMGCSLAAV), 247–267 (EVSFNLGGLSGAMISNVGFVL), 287–307 (LYGCISILSLLYLFPVAIFVE), 318–338 (AIASVGTPSTFYFWVLLSGVF), and 384–404 (LNALGSAIAIFGTFLYSQATA). One can recognise an EamA domain in the interval 127–243 (NIFNKKALNV…LPIVMGCSLA (117 aa)).

It belongs to the TPT transporter family. TPT (TC 2.A.7.9) subfamily. In terms of tissue distribution, widely expressed.

It localises to the plastid. The protein localises to the chloroplast membrane. Sugar phosphate/phosphate translocator that transports inorganic phosphate, triose phosphate, 3-phosphoglycerate, xylulose 5-phosphate (Xul-5-P) and to a lesser extent ribulose 5-phosphate. Does not transport ribose 5-phosphate or hexose phosphates. Provides cytosolic Xul-5-P to the chloroplast, where it is used as an intermediate in the plastidic pentose phosphate pathways. The polypeptide is Xylulose 5-phosphate/phosphate translocator, chloroplastic (XPT) (Arabidopsis thaliana (Mouse-ear cress)).